A 349-amino-acid chain; its full sequence is tRNA pseudouridine synthase D (349 aa).

Phe27 contacts substrate. Residue Asp80 is the Nucleophile of the active site. Asn129 contacts substrate. A TRUD domain is found at 155 to 303 (GVPNYFGAQR…VEASRRAMLL (149 aa)). Phe329 serves as a coordination point for substrate.

This sequence belongs to the pseudouridine synthase TruD family.

It catalyses the reaction uridine(13) in tRNA = pseudouridine(13) in tRNA. Responsible for synthesis of pseudouridine from uracil-13 in transfer RNAs. The chain is tRNA pseudouridine synthase D from Salmonella choleraesuis (strain SC-B67).